The chain runs to 279 residues: Small ribosomal subunit protein uS2 (279 aa).

The disordered stretch occupies residues 232 to 260; sequence KVDMEAAGENAPKGAGKKKNTKARMDKAE.

The protein belongs to the universal ribosomal protein uS2 family.

The chain is Small ribosomal subunit protein uS2 from Phocaeicola vulgatus (strain ATCC 8482 / DSM 1447 / JCM 5826 / CCUG 4940 / NBRC 14291 / NCTC 11154) (Bacteroides vulgatus).